Here is a 465-residue protein sequence, read N- to C-terminus: Kynureninase (465 aa).

Met1 is subject to N-acetylmethionine. Residues Leu137, Thr138, 165-168 (FPSD), Ser221, Asp250, His253, and Tyr275 each bind pyridoxal 5'-phosphate. Residue Lys276 is modified to N6-(pyridoxal phosphate)lysine. Trp305 and Asn333 together coordinate pyridoxal 5'-phosphate.

The protein belongs to the kynureninase family. As to quaternary structure, homodimer. It depends on pyridoxal 5'-phosphate as a cofactor. As to expression, expressed in all tissues tested (heart, brain placenta, lung, liver, skeletal muscle, kidney and pancreas). Highest levels found in placenta, liver and lung. Expressed in all brain regions.

It localises to the cytoplasm. Its subcellular location is the cytosol. It catalyses the reaction L-kynurenine + H2O = anthranilate + L-alanine + H(+). The enzyme catalyses 3-hydroxy-L-kynurenine + H2O = 3-hydroxyanthranilate + L-alanine + H(+). It functions in the pathway amino-acid degradation; L-kynurenine degradation; L-alanine and anthranilate from L-kynurenine: step 1/1. It participates in cofactor biosynthesis; NAD(+) biosynthesis; quinolinate from L-kynurenine: step 2/3. With respect to regulation, inhibited by o-methoxybenzoylalanine (OMBA). Its function is as follows. Catalyzes the cleavage of L-kynurenine (L-Kyn) and L-3-hydroxykynurenine (L-3OHKyn) into anthranilic acid (AA) and 3-hydroxyanthranilic acid (3-OHAA), respectively. Has a preference for the L-3-hydroxy form. Also has cysteine-conjugate-beta-lyase activity. In Homo sapiens (Human), this protein is Kynureninase.